The primary structure comprises 428 residues: tRNA(Ile)-lysidine synthase (428 aa).

Residue 25–30 (SGGIDS) participates in ATP binding.

It belongs to the tRNA(Ile)-lysidine synthase family.

It localises to the cytoplasm. The catalysed reaction is cytidine(34) in tRNA(Ile2) + L-lysine + ATP = lysidine(34) in tRNA(Ile2) + AMP + diphosphate + H(+). Ligates lysine onto the cytidine present at position 34 of the AUA codon-specific tRNA(Ile) that contains the anticodon CAU, in an ATP-dependent manner. Cytidine is converted to lysidine, thus changing the amino acid specificity of the tRNA from methionine to isoleucine. This Haemophilus ducreyi (strain 35000HP / ATCC 700724) protein is tRNA(Ile)-lysidine synthase.